The following is a 206-amino-acid chain: LexA repressor (206 aa).

The segment at residues 28–48 is a DNA-binding region (H-T-H motif); the sequence is RAEIARELGFRSANAAEEHLK. Catalysis depends on for autocatalytic cleavage activity residues Ser-123 and Lys-160.

This sequence belongs to the peptidase S24 family. In terms of assembly, homodimer.

It carries out the reaction Hydrolysis of Ala-|-Gly bond in repressor LexA.. In terms of biological role, represses a number of genes involved in the response to DNA damage (SOS response), including recA and lexA. In the presence of single-stranded DNA, RecA interacts with LexA causing an autocatalytic cleavage which disrupts the DNA-binding part of LexA, leading to derepression of the SOS regulon and eventually DNA repair. This Vibrio parahaemolyticus serotype O3:K6 (strain RIMD 2210633) protein is LexA repressor.